A 316-amino-acid polypeptide reads, in one-letter code: Conjugated bile acid hydrolase (316 aa).

The Nucleophile role is filled by Cys-2. Residues Cys-2 and Arg-18 each contribute to the deoxycholate site. Asn-81 is a binding site for taurine.

The protein belongs to the peptidase C59 family.

It carries out the reaction cholate + taurine = taurocholate + H2O. The catalysed reaction is taurodeoxycholate + H2O = deoxycholate + taurine. The enzyme catalyses taurochenodeoxycholate + H2O = chenodeoxycholate + taurine. It catalyses the reaction glycocholate + H2O = cholate + glycine. It participates in lipid metabolism; bile acid biosynthesis. With respect to regulation, glycocholate hydrolysis is inhibited by various previously identified BSH inhibitors, including KIO(3), NaHIO(3), NaIO(4), CuCl(2), menadione, riboflavin, gossypetin, and the antibiotics oxytetracycline, demeclocycline hydrochloride and methacycline hydrochloride. In terms of biological role, bile salt hydrolase that catalyzes the deconjugation of glycine- and taurine-linked bile salts, which occurs naturally in the intestines of animals, releasing amino acid residues and deconjugated bile salts (bile acids). Can hydrolyze the amide bond in the bile salts taurocholate (TCA), taurodeoxycholate (TDCA), taurochenodeoxycholate (TCDCA), taurohyodeoxycholate (THDCA) and tauroursodeoxycholate (TUDCA). Oh et al. did not detect activity with the glycine-conjugated bile salts glycocholate (GCA), glycodeoxycholate (GDCA) and glycochenodeoxycholate (GCDCA). However, a later study shows activity toward glycocholate (GCA). The protein is Conjugated bile acid hydrolase of Lactobacillus acidophilus.